A 289-amino-acid polypeptide reads, in one-letter code: NAD kinase (289 aa).

The active-site Proton acceptor is aspartate 63. NAD(+) contacts are provided by residues aspartate 63–glycine 64, arginine 68, asparagine 138–aspartate 139, arginine 149, aspartate 168, threonine 179–serine 184, and glutamine 238.

The protein belongs to the NAD kinase family. A divalent metal cation is required as a cofactor.

Its subcellular location is the cytoplasm. It carries out the reaction NAD(+) + ATP = ADP + NADP(+) + H(+). Its function is as follows. Involved in the regulation of the intracellular balance of NAD and NADP, and is a key enzyme in the biosynthesis of NADP. Catalyzes specifically the phosphorylation on 2'-hydroxyl of the adenosine moiety of NAD to yield NADP. This is NAD kinase from Gemmatimonas aurantiaca (strain DSM 14586 / JCM 11422 / NBRC 100505 / T-27).